A 426-amino-acid polypeptide reads, in one-letter code: Glutamate-1-semialdehyde 2,1-aminomutase (426 aa).

Residue lysine 265 is modified to N6-(pyridoxal phosphate)lysine.

It belongs to the class-III pyridoxal-phosphate-dependent aminotransferase family. HemL subfamily. In terms of assembly, homodimer. Pyridoxal 5'-phosphate is required as a cofactor.

Its subcellular location is the cytoplasm. It catalyses the reaction (S)-4-amino-5-oxopentanoate = 5-aminolevulinate. The protein operates within porphyrin-containing compound metabolism; protoporphyrin-IX biosynthesis; 5-aminolevulinate from L-glutamyl-tRNA(Glu): step 2/2. The polypeptide is Glutamate-1-semialdehyde 2,1-aminomutase (Alcanivorax borkumensis (strain ATCC 700651 / DSM 11573 / NCIMB 13689 / SK2)).